A 193-amino-acid polypeptide reads, in one-letter code: C-type lectin domain family 3 member A homolog (193 aa).

An N-terminal signal peptide occupies residues 1-24 (MAQAGLLIWLFFTILLLDLTCTQS). Disulfide bonds link Cys-66/Cys-76, Cys-93/Cys-188, and Cys-164/Cys-180. A C-type lectin domain is found at 72 to 189 (IHKKCYLSFE…CRSLKKYICE (118 aa)).

The protein localises to the secreted. The protein is C-type lectin domain family 3 member A homolog (clec3a) of Xenopus laevis (African clawed frog).